A 192-amino-acid chain; its full sequence is UPF0149 protein YgfB (192 aa).

Belongs to the UPF0149 family.

The chain is UPF0149 protein YgfB from Escherichia coli O127:H6 (strain E2348/69 / EPEC).